Reading from the N-terminus, the 354-residue chain is Selenide, water dikinase (354 aa).

The active site involves C23. Residues K26 and 54-56 (TSD) each bind ATP. D57 is a Mg(2+) binding site. Residues D74, D97, and 145 to 147 (GHS) each bind ATP. Position 97 (D97) interacts with Mg(2+). Residue D233 coordinates Mg(2+).

It belongs to the selenophosphate synthase 1 family. Class I subfamily. In terms of assembly, homodimer. Mg(2+) is required as a cofactor.

The catalysed reaction is hydrogenselenide + ATP + H2O = selenophosphate + AMP + phosphate + 2 H(+). Functionally, synthesizes selenophosphate from selenide and ATP. The sequence is that of Selenide, water dikinase from Burkholderia orbicola (strain MC0-3).